The sequence spans 285 residues: RNA polymerase sigma factor RpoH (285 aa).

The interval 53-122 is sigma-70 factor domain-2; that stretch reads LILSHLRFVA…IHEYVLRNWR (70 aa). The short motif at 77 to 80 is the Interaction with polymerase core subunit RpoC element; it reads DLIQ. The segment at 229 to 281 is sigma-70 factor domain-4; that stretch reads ALEGLDERSQHIIRARWLDDDNKSTLQELADQYGVSAERVRQLEKNAMKKLKM. The H-T-H motif DNA-binding region spans 254–273; the sequence is LQELADQYGVSAERVRQLEK.

It belongs to the sigma-70 factor family. RpoH subfamily. In terms of assembly, interacts with the RNA polymerase core enzyme.

It localises to the cytoplasm. Functionally, sigma factors are initiation factors that promote the attachment of RNA polymerase to specific initiation sites and are then released. This sigma factor is involved in regulation of expression of heat shock genes. The sequence is that of RNA polymerase sigma factor RpoH from Serratia marcescens.